Reading from the N-terminus, the 317-residue chain is Transaldolase (317 aa).

Residue Lys-131 is the Schiff-base intermediate with substrate of the active site.

Belongs to the transaldolase family. Type 1 subfamily. In terms of assembly, homodimer.

It localises to the cytoplasm. The catalysed reaction is D-sedoheptulose 7-phosphate + D-glyceraldehyde 3-phosphate = D-erythrose 4-phosphate + beta-D-fructose 6-phosphate. It participates in carbohydrate degradation; pentose phosphate pathway; D-glyceraldehyde 3-phosphate and beta-D-fructose 6-phosphate from D-ribose 5-phosphate and D-xylulose 5-phosphate (non-oxidative stage): step 2/3. In terms of biological role, transaldolase is important for the balance of metabolites in the pentose-phosphate pathway. In Baumannia cicadellinicola subsp. Homalodisca coagulata, this protein is Transaldolase.